We begin with the raw amino-acid sequence, 307 residues long: UDP-3-O-acyl-N-acetylglucosamine deacetylase (307 aa).

Zn(2+)-binding residues include histidine 78, histidine 241, and aspartate 245. Histidine 268 functions as the Proton donor in the catalytic mechanism.

It belongs to the LpxC family. Zn(2+) is required as a cofactor.

It carries out the reaction a UDP-3-O-[(3R)-3-hydroxyacyl]-N-acetyl-alpha-D-glucosamine + H2O = a UDP-3-O-[(3R)-3-hydroxyacyl]-alpha-D-glucosamine + acetate. It participates in glycolipid biosynthesis; lipid IV(A) biosynthesis; lipid IV(A) from (3R)-3-hydroxytetradecanoyl-[acyl-carrier-protein] and UDP-N-acetyl-alpha-D-glucosamine: step 2/6. In terms of biological role, catalyzes the hydrolysis of UDP-3-O-myristoyl-N-acetylglucosamine to form UDP-3-O-myristoylglucosamine and acetate, the committed step in lipid A biosynthesis. This is UDP-3-O-acyl-N-acetylglucosamine deacetylase from Acidovorax sp. (strain JS42).